A 427-amino-acid chain; its full sequence is Phosphatidate cytidylyltransferase, mitochondrial (427 aa).

The segment covering 94–106 has biased composition (polar residues); sequence YNRNGDGSTSTEN. A disordered region spans residues 94–113; that stretch reads YNRNGDGSTSTENPSKKEEQ.

It belongs to the TAM41 family. Mg(2+) serves as cofactor.

Its subcellular location is the mitochondrion inner membrane. The enzyme catalyses a 1,2-diacyl-sn-glycero-3-phosphate + CTP + H(+) = a CDP-1,2-diacyl-sn-glycerol + diphosphate. The protein operates within phospholipid metabolism; CDP-diacylglycerol biosynthesis; CDP-diacylglycerol from sn-glycerol 3-phosphate: step 3/3. Functionally, catalyzes the formation of CDP-diacylglycerol (CDP-DAG) from phosphatidic acid (PA) in the mitochondrial inner membrane. Required for the biosynthesis of the dimeric phospholipid cardiolipin, which stabilizes supercomplexes of the mitochondrial respiratory chain in the mitochondrial inner membrane. This is Phosphatidate cytidylyltransferase, mitochondrial from Dictyostelium discoideum (Social amoeba).